The following is a 200-amino-acid chain: Non-specific lipid transfer protein GPI-anchored 16 (200 aa).

Positions 1-20 are cleaved as a signal peptide; the sequence is MEGLTLIVVMMSSFMLGGQG. Disulfide bonds link Cys-27–Cys-72, Cys-38–Cys-56, Cys-57–Cys-98, and Cys-70–Cys-107. Asn-87 carries an N-linked (GlcNAc...) asparagine glycan. A disordered region spans residues 134 to 182; sequence SPGASKAAGTTPTQAPAPDTPADGPTGPTTKSGIRPVDQPMQPTGLAQS. Residues 140-163 show a composition bias toward low complexity; the sequence is AAGTTPTQAPAPDTPADGPTGPTT. A lipid anchor (GPI-anchor amidated threonine) is attached at Thr-177. The propeptide at 178-200 is removed in mature form; the sequence is GLAQSSTSPFLPLLFISLILLNL.

Belongs to the plant LTP family. In terms of tissue distribution, expressed in seedlings, preferentially in hypocotyls and roots. Also observed in siliques.

It is found in the cell membrane. In terms of biological role, essential protein involved in female gametophyte development. Probable lipid transfer protein. The sequence is that of Non-specific lipid transfer protein GPI-anchored 16 from Arabidopsis thaliana (Mouse-ear cress).